Consider the following 214-residue polypeptide: Large ribosomal subunit protein uL3 (214 aa).

Residues 131–153 (KSQRASHGNSRSHNVPGSIGMAQ) form a disordered region. Residues 132-145 (SQRASHGNSRSHNV) show a composition bias toward polar residues. Q153 carries the post-translational modification N5-methylglutamine.

It belongs to the universal ribosomal protein uL3 family. In terms of assembly, part of the 50S ribosomal subunit. Forms a cluster with proteins L14 and L19. In terms of processing, methylated by PrmB.

Functionally, one of the primary rRNA binding proteins, it binds directly near the 3'-end of the 23S rRNA, where it nucleates assembly of the 50S subunit. In Thiobacillus denitrificans (strain ATCC 25259 / T1), this protein is Large ribosomal subunit protein uL3.